The primary structure comprises 373 residues: tRNA (guanine(26)-N(2))-dimethyltransferase (373 aa).

Positions Lys2–Ile365 constitute a Trm1 methyltransferase domain. 5 residues coordinate S-adenosyl-L-methionine: Arg35, Arg66, Asp86, Asp113, and Ala114.

The protein belongs to the class I-like SAM-binding methyltransferase superfamily. Trm1 family.

The catalysed reaction is guanosine(26) in tRNA + 2 S-adenosyl-L-methionine = N(2)-dimethylguanosine(26) in tRNA + 2 S-adenosyl-L-homocysteine + 2 H(+). Functionally, dimethylates a single guanine residue at position 26 of a number of tRNAs using S-adenosyl-L-methionine as donor of the methyl groups. This is tRNA (guanine(26)-N(2))-dimethyltransferase from Methanococcus maripaludis (strain C7 / ATCC BAA-1331).